The chain runs to 149 residues: Arginine regulator (149 aa).

Belongs to the ArgR family.

It is found in the cytoplasm. Its pathway is amino-acid degradation; L-arginine degradation via ADI pathway. In terms of biological role, regulates the transcription of the arc operon, involved in arginine catabolism. The polypeptide is Arginine regulator (argR1) (Bacillus cereus (strain ATCC 14579 / DSM 31 / CCUG 7414 / JCM 2152 / NBRC 15305 / NCIMB 9373 / NCTC 2599 / NRRL B-3711)).